The following is a 44-amino-acid chain: Somatoliberin (44 aa).

The residue at position 44 (leucine 44) is a Leucine amide.

The protein belongs to the glucagon family.

The protein resides in the secreted. Its function is as follows. GRF is released by the hypothalamus and acts on the adenohypophyse to stimulate the secretion of growth hormone. The protein is Somatoliberin (GHRH) of Ovis aries (Sheep).